A 685-amino-acid chain; its full sequence is Probable glucan endo-1,3-beta-glucosidase btgC (685 aa).

Disordered regions lie at residues 1-96, 119-168, and 180-202; these read MSGP…NLGP, GIDA…RDSY, and PAGQ…SPYQ. The Cytoplasmic segment spans residues 1–312; it reads MSGPHRSFSF…PTPGGGSRKR (312 aa). Polar residues-rich tracts occupy residues 47–61 and 73–90; these read SARS…SSGF and GQNS…TTPG. Residues 313–333 form a helical; Signal-anchor for type II membrane protein membrane-spanning segment; it reads GWIVGLALAFIVVGAIVGGAV. At 334 to 685 the chain is on the extracellular side; that stretch reads GGTLGNRENE…IPDCGGKTAA (352 aa). The interval 335-369 is disordered; the sequence is GTLGNRENEAPDTTKSASSDTESNGDLNKDSSEIK. A compositionally biased stretch (polar residues) spans 345–360; that stretch reads PDTTKSASSDTESNGD. N-linked (GlcNAc...) asparagine glycosylation is found at asparagine 405, asparagine 428, and asparagine 456. Glutamate 488 (proton donor) is an active-site residue. The active-site Nucleophile is glutamate 587. Asparagine 632 is a glycosylation site (N-linked (GlcNAc...) asparagine).

Belongs to the glycosyl hydrolase 17 family.

It is found in the cell membrane. The enzyme catalyses Hydrolysis of (1-&gt;3)-beta-D-glucosidic linkages in (1-&gt;3)-beta-D-glucans.. Functionally, glucanases play a role in cell expansion during growth, in cell-cell fusion during mating, and in spore release during sporulation. This enzyme may be involved in beta-glucan degradation. Active on laminarin and lichenan. This Aspergillus oryzae (strain ATCC 42149 / RIB 40) (Yellow koji mold) protein is Probable glucan endo-1,3-beta-glucosidase btgC (btgC).